A 227-amino-acid chain; its full sequence is Bone marrow proteoglycan (227 aa).

The first 16 residues, 1-16 (MKFPLLLALLVGGAFA), serve as a signal peptide directing secretion. The propeptide at 17–110 (LHLSSEASDS…TSLMGDSGFK (94 aa)) is acidic. Residues 21–105 (SEASDSKSPL…KEEDTTSLMG (85 aa)) form a disordered region. An O-linked (GalNAc...) serine glycan is attached at Ser24. Residues 34–46 (SLPREAEISRPEV) are compositionally biased toward basic and acidic residues. The span at 58-70 (LEEEEEEEEEEGS) shows a compositional bias: acidic residues. Ser70 carries O-linked (Xyl...) (chondroitin sulfate) serine glycosylation. Positions 128-227 (LVCRSCYRGT…GKRRPFICAY (100 aa)) constitute a C-type lectin domain. 2 disulfide bridges follow: Cys130–Cys225 and Cys202–Cys217.

Post-translationally, nitrated.

The protein resides in the secreted. Its function is as follows. Cytotoxin and helminthotoxin. MBP also induces non-cytolytic histamine release from basophils. It is involved in antiparasitic defense mechanisms and immune hypersensitivity reactions. This is Bone marrow proteoglycan (Prg2) from Rattus norvegicus (Rat).